The sequence spans 245 residues: Probable phosphatase NT01EI_1577 (245 aa).

H7, H9, H15, H40, E73, H101, H131, D192, and H194 together coordinate Zn(2+).

Belongs to the PHP family. As to quaternary structure, homotrimer. Zn(2+) is required as a cofactor.

This Edwardsiella ictaluri (strain 93-146) protein is Probable phosphatase NT01EI_1577.